Consider the following 416-residue polypeptide: Trehalose synthase (416 aa).

It belongs to the glycosyltransferase group 1 family. Glycosyltransferase 4 subfamily. In terms of assembly, homodimer. Requires Mg(2+) as cofactor.

The catalysed reaction is an NDP-alpha-D-glucose + D-glucose = alpha,alpha-trehalose + a ribonucleoside 5'-diphosphate + H(+). With respect to regulation, inhibited by 20 mM Fe(3+) and Mn(2+). Partially inhibited by Zn(2+) and Ni(2+). Activity is slightly enhanced by 2 mM Fe (3+), Mn (2+), Ca(2+) or Li(+) and by 20 mM Mg(2+), Ca(2+) or Li(+). Its function is as follows. Synthesizes trehalose from ADP-glucose and glucose. The reaction is reversible, the equilibrium strongly favors trehalose synthesis. This Rubrobacter xylanophilus (strain DSM 9941 / JCM 11954 / NBRC 16129 / PRD-1) protein is Trehalose synthase.